A 123-amino-acid chain; its full sequence is Protein Wnt-7a (123 aa).

The O-palmitoleoyl serine; by PORCN moiety is linked to residue S1. The tract at residues 33-61 is disordered linker; sequence VEPVRASRNKRPTFLKIKKPLSYRKPMDT. A disulfide bridge links C89 with C104. A glycan (N-linked (GlcNAc...) asparagine) is linked at N90.

This sequence belongs to the Wnt family. Forms a soluble 1:1 complex with AFM; this prevents oligomerization and is required for prolonged biological activity. The complex with AFM may represent the physiological form in body fluids. Interacts with FZD5. Interacts with PORCN. Post-translationally, palmitoleoylation is required for efficient binding to frizzled receptors. Depalmitoleoylation leads to Wnt signaling pathway inhibition.

It is found in the secreted. The protein localises to the extracellular space. Its subcellular location is the extracellular matrix. In terms of biological role, ligand for members of the frizzled family of seven transmembrane receptors that functions in the canonical Wnt/beta-catenin signaling pathway. Plays an important role in embryonic development, including dorsal versus ventral patterning during limb development, skeleton development and urogenital tract development. Required for central nervous system (CNS) angiogenesis and blood-brain barrier regulation. The sequence is that of Protein Wnt-7a (WNT7A) from Meleagris gallopavo (Wild turkey).